Consider the following 188-residue polypeptide: uncharacterized protein (188 aa).

The chain crosses the membrane as a helical span at residues threonine 136–tryptophan 156.

The protein resides in the host membrane. This is an uncharacterized protein from Magallana gigas (Pacific oyster).